Consider the following 52-residue polypeptide: UPF0181 protein VPA0916 (52 aa).

It belongs to the UPF0181 family.

The sequence is that of UPF0181 protein VPA0916 from Vibrio parahaemolyticus serotype O3:K6 (strain RIMD 2210633).